The primary structure comprises 121 residues: Piercer of microtubule wall 2 protein (121 aa).

A compositionally biased stretch (basic and acidic residues) spans 1–10 (MTDRNRDKKS). The disordered stretch occupies residues 1 to 29 (MTDRNRDKKSTSPSNSDTEMKSEQLPPCV).

It belongs to the PIERCE2 family. As to quaternary structure, microtubule inner protein component of sperm flagellar doublet microtubules. Interacts with CFAP53, ODAD1 and ODAD3; the interactions link the outer dynein arms docking complex (ODA-DC) to the internal microtubule inner proteins (MIP) in cilium axoneme. Expressed in airway epithelial cells.

Its subcellular location is the cytoplasm. The protein localises to the cytoskeleton. It is found in the cilium axoneme. The protein resides in the flagellum axoneme. In terms of biological role, microtubule inner protein involved in the attachment of outer dynein arms (ODAs) to dynein-decorated doublet microtubules (DMTs) in cilia axoneme, which is required for motile cilia beating. The protein is Piercer of microtubule wall 2 protein of Homo sapiens (Human).